Here is a 256-residue protein sequence, read N- to C-terminus: Imidazole glycerol phosphate synthase subunit HisF (256 aa).

Residues aspartate 12 and aspartate 131 contribute to the active site.

Belongs to the HisA/HisF family. In terms of assembly, heterodimer of HisH and HisF.

Its subcellular location is the cytoplasm. The catalysed reaction is 5-[(5-phospho-1-deoxy-D-ribulos-1-ylimino)methylamino]-1-(5-phospho-beta-D-ribosyl)imidazole-4-carboxamide + L-glutamine = D-erythro-1-(imidazol-4-yl)glycerol 3-phosphate + 5-amino-1-(5-phospho-beta-D-ribosyl)imidazole-4-carboxamide + L-glutamate + H(+). It functions in the pathway amino-acid biosynthesis; L-histidine biosynthesis; L-histidine from 5-phospho-alpha-D-ribose 1-diphosphate: step 5/9. In terms of biological role, IGPS catalyzes the conversion of PRFAR and glutamine to IGP, AICAR and glutamate. The HisF subunit catalyzes the cyclization activity that produces IGP and AICAR from PRFAR using the ammonia provided by the HisH subunit. This chain is Imidazole glycerol phosphate synthase subunit HisF, found in Thermobifida fusca (strain YX).